The sequence spans 258 residues: MSLIDPRAIIDPSATLAPDVRVGPWTLIGPHVHIGEGTEIGPHVIVRGPTWIGRHNRIFQFSTIGEDTPDLKYKGEPTRLVIGDHNVIREGVTIHRGTVQDRSETTIGDHNLIMAYVHIGHDSVMGSHCILVNNASLAGHVHVGDWAILSGYTLIHQHCQIGAHSFVGMGSGVSKDVPAFVTVLGSPAQARSMNFEGMRRRGFSPEAMNALRRAYKVVYRQGLTVEQALVELEESAKQFPEVAIFRDSVRASTRGITR.

This sequence belongs to the transferase hexapeptide repeat family. LpxA subfamily. As to quaternary structure, homotrimer.

It localises to the cytoplasm. It carries out the reaction a (3R)-hydroxyacyl-[ACP] + UDP-N-acetyl-alpha-D-glucosamine = a UDP-3-O-[(3R)-3-hydroxyacyl]-N-acetyl-alpha-D-glucosamine + holo-[ACP]. It participates in glycolipid biosynthesis; lipid IV(A) biosynthesis; lipid IV(A) from (3R)-3-hydroxytetradecanoyl-[acyl-carrier-protein] and UDP-N-acetyl-alpha-D-glucosamine: step 1/6. In terms of biological role, involved in the biosynthesis of lipid A, a phosphorylated glycolipid that anchors the lipopolysaccharide to the outer membrane of the cell. This Azotobacter vinelandii (strain DJ / ATCC BAA-1303) protein is Acyl-[acyl-carrier-protein]--UDP-N-acetylglucosamine O-acyltransferase.